The chain runs to 429 residues: 3-isopropylmalate dehydratase large subunit (429 aa).

Cys303, Cys363, and Cys366 together coordinate [4Fe-4S] cluster.

The protein belongs to the aconitase/IPM isomerase family. LeuC type 2 subfamily. In terms of assembly, heterodimer of LeuC and LeuD. Requires [4Fe-4S] cluster as cofactor.

The catalysed reaction is (2R,3S)-3-isopropylmalate = (2S)-2-isopropylmalate. The protein operates within amino-acid biosynthesis; L-leucine biosynthesis; L-leucine from 3-methyl-2-oxobutanoate: step 2/4. Its function is as follows. Catalyzes the isomerization between 2-isopropylmalate and 3-isopropylmalate, via the formation of 2-isopropylmaleate. The protein is 3-isopropylmalate dehydratase large subunit of Caldicellulosiruptor bescii (strain ATCC BAA-1888 / DSM 6725 / KCTC 15123 / Z-1320) (Anaerocellum thermophilum).